The chain runs to 379 residues: Cell cycle checkpoint control protein RAD9A (379 aa).

Tyr17 is subject to Phosphotyrosine. The interval 40-80 (FLFAPLFFQQYQAATPGQDLLRCKILMKSFLSVFRSLAMLE) is possesses 3'-5' exonuclease activity. A sufficient for interaction with ABL1 region spans residues 255 to 379 (SDTDSHSQDL…VLAEDSEGEG (125 aa)). The segment covering 257–271 (TDSHSQDLGSPERHQ) has biased composition (basic and acidic residues). Disordered stretches follow at residues 257–289 (TDSH…DFAN) and 308–379 (SRVL…EGEG). Phosphoserine is present on residues Ser261, Ser266, Ser317, Ser330, Ser363, Ser368, and Ser375.

The protein belongs to the rad9 family. Component of the toroidal 9-1-1 (RAD9-RAD1-HUS1) complex, composed of RAD9A, RAD1 and HUS1. The 9-1-1 complex associates with LIG1, POLB, FEN1, RAD17, HDAC1, RPA1 and RPA2. The 9-1-1 complex associates with the RAD17-RFC complex. RAD9A interacts with BCL2L1, FEN1, RAD9B, ABL1, RPA1, ATAD5 and RPA2. Interacts with DNAJC7. Interacts (when phosphorylated) with TOPBP1. Constitutively phosphorylated on serine and threonine amino acids in absence of DNA damage. Hyperphosphorylated by PRKCD and ABL1 upon DNA damage. Its phosphorylation by PRKCD may be required for the formation of the 9-1-1 complex. Phosphorylated at Ser-330 and Ser-375 by CK2, promoting interaction with TOPBP1.

The protein localises to the nucleus. The enzyme catalyses Exonucleolytic cleavage in the 3'- to 5'-direction to yield nucleoside 5'-phosphates.. In terms of biological role, component of the 9-1-1 cell-cycle checkpoint response complex that plays a major role in DNA repair. The 9-1-1 complex is recruited to DNA lesion upon damage by the RAD17-replication factor C (RFC) clamp loader complex. Acts then as a sliding clamp platform on DNA for several proteins involved in long-patch base excision repair (LP-BER). The 9-1-1 complex stimulates DNA polymerase beta (POLB) activity by increasing its affinity for the 3'-OH end of the primer-template and stabilizes POLB to those sites where LP-BER proceeds; endonuclease FEN1 cleavage activity on substrates with double, nick, or gap flaps of distinct sequences and lengths; and DNA ligase I (LIG1) on long-patch base excision repair substrates. The 9-1-1 complex is necessary for the recruitment of RHNO1 to sites of double-stranded breaks (DSB) occurring during the S phase. RAD9A possesses 3'-&gt;5' double stranded DNA exonuclease activity. This Macaca fascicularis (Crab-eating macaque) protein is Cell cycle checkpoint control protein RAD9A (RAD9A).